The following is a 1227-amino-acid chain: Pentatricopeptide repeat-containing protein At5g15280, mitochondrial (1227 aa).

The transit peptide at 1 to 31 directs the protein to the mitochondrion; that stretch reads MLNLLSISSSSRLRFLNKVSSLTYHYSFAFF. 28 PPR repeats span residues 146–180, 182–216, 217–251, 255–289, 290–320, 322–356, 357–391, 392–426, 427–461, 527–561, 562–597, 598–632, 633–667, 668–698, 703–737, 738–772, 773–800, 802–836, 837–871, 872–906, 908–942, 943–977, 978–1012, 1014–1044, 1047–1081, 1082–1116, 1117–1151, and 1152–1186; these read LPQACEIMASMLIREGMVKEVELLLMEMERHGDTM, NEGIFCDLIGKYVDDFDSRKAVMLFDWMRRKGLVP, LTSCYQILIDQLVRVHRTESAYRICLDWVETRAEL, NIDSIGKVIELLCLDQKVQEARVLARKLVALGCIL, NSSIYSKITIGYNEKQDFEDLLSFIGEVKYE, DVFVGNRILHSLCRRFGSERAYVYMEELEHLGFKQ, DEVTFGILIGWCCYEGDIKRAVLYLSEIMSKGYKP, DVYSYNAILSGLFRKGLWQHTHCILDEMKENGMML, SLSTFKIMVTGYCKARQFEEAKRIVNKMFGYGLIE, VLPEFNSLIVRASEDGDLQTALRLLDEMARWGQKL, SRRSFAVLMRSLCASRAHLRVSISLLEKWPKLAYQL, DGETLNFLVQEYCKKGFSRHSKLIFHKMVQMHHPI, DNVTYTSLIRCFCKKETLNDLLNVWGAAQNDNWLP, DLNDCGDLWNCLVRKGLVEEVVQLFERVFIS, QSEACRIFVEKLTVLGFSCIAHSVVKRLEGEGCIV, EQEVYNHLIKGLCTEKKDSAAFAILDEMLDKKHIP, SLGSCLMLIPRLCRANKAGTAFNLAEQI, SSYVHYALIKGLSLAGKMLDAENQLRIMLSNGLSS, YNKIYNVMFQGYCKGNNWMKVEEVLGLMVRKNIIC, SVKSYREYVRKMCLEPQSLSAISLKEFLLLGESNP, GVIIYNMLIFYMFRAKNHLEVNKVLLEMQGRGVLP, DETTFNFLVHGYSSSADYSSSLRYLSAMISKGMKP, NNRSLRAVTSSLCDNGDVKKALDLWQVMESKGWNL, SSVVQTKIVETLISKGEIPKAEDFLTRVTRN, MAPNYDNIIKKLSDRGNLDIAVHLLNTMLKNQSIP, GSSSYDSVINGLLRYNQLDKAMDFHTEMVELGLSP, SISTWSGLVHKFCEACQVLESERLIKSMVGLGESP, and SQEMFKTVIDRFRVEKNTVKASEMMEMMQKCGYEV.

It belongs to the PPR family. P subfamily.

The protein localises to the mitochondrion. This is Pentatricopeptide repeat-containing protein At5g15280, mitochondrial from Arabidopsis thaliana (Mouse-ear cress).